Reading from the N-terminus, the 151-residue chain is Myosin catalytic light chain, smooth muscle (151 aa).

A1 is subject to N-acetylalanine. EF-hand domains are found at residues 6–41, 83–118, and 119–151; these read DRITECQEAFELFDRSAEGKVFLGQVGDILRALGQN, GSYEDFVEGLRVFDKENNGKIMGAELRHVLSTLGEK, and MSEEEVEESLLQGQQDPNGCIHYEEFSKYLLEG.

Functionally, in molluscan muscle, calcium regulation is associated with myosin rather than with actin. Muscle myosin contains two types of light chains: the catalytic light chain, essential for ATPase activity, and the regulatory light chain, a calcium-binding protein responsible for Ca(2+) dependent binding and Ca(2+) dependent Mg-ATPase activity. This chain is Myosin catalytic light chain, smooth muscle, found in Halocynthia roretzi (Sea squirt).